A 352-amino-acid polypeptide reads, in one-letter code: Sodium-lithium/proton antiporter (352 aa).

8 consecutive transmembrane segments (helical) span residues 11–31 (ILLL…PVSV), 32–52 (PLII…WMQF), 61–81 (AVTI…TYAV), 159–179 (IPEY…FMLE), 216–236 (AQFL…FWIT), 241–261 (IVMS…SIVI), 271–291 (IVGD…LLAI), and 317–337 (IGLQ…VIAF).

This sequence belongs to the autoinducer-2 exporter (AI-2E) (TC 2.A.86) family.

The protein localises to the cell membrane. Its function is as follows. Catalyzes the pH-dependent efflux of sodium and lithium in exchange for external protons. This chain is Sodium-lithium/proton antiporter, found in Halobacillus andaensis.